The primary structure comprises 469 residues: MTSQLHKKGEAWSARFSEPMSELVKRYTSSVFFDKRLALVDIAGSLAHANMLAAQKIISADDLAAIERGMAQIKGEIERGEFEWQLDLEDVHLNIEARLTALIGDAGKRLHTGRSRNDQVATDIRLWLRGEIDRIGGLLNDLRGALLDLAEQNADTIMPGFTHLQVAQPVTFGHHLLAYVEMFSRDAERMRDCRTRVNRLPLGAAALAGTSYPIDRHAVAKTLGFDGICANSLDAVSDRDFAIEFTAASALVMTHVSRFSEELVLWMSPRVGFIDIADRFCTGSSIMPQKKNPDVPELARGKTGRVNGHLMALLTLMKGQPLAYNKDNQEDKEPLFDTVDTVADTLRIFAEMVAGITVKPDAMRAAALQGFSTATDLADYLVKRGLPFRDAHEAVAHAVKVCDDRGIDLADLTLDEMKQELPNVAHLIGEDVFGYLTLEGSVASRNHPGGTAPDQVRAAVKAARAALGQ.

This sequence belongs to the lyase 1 family. Argininosuccinate lyase subfamily.

The protein localises to the cytoplasm. The enzyme catalyses 2-(N(omega)-L-arginino)succinate = fumarate + L-arginine. The protein operates within amino-acid biosynthesis; L-arginine biosynthesis; L-arginine from L-ornithine and carbamoyl phosphate: step 3/3. The polypeptide is Argininosuccinate lyase (Burkholderia lata (strain ATCC 17760 / DSM 23089 / LMG 22485 / NCIMB 9086 / R18194 / 383)).